We begin with the raw amino-acid sequence, 361 residues long: AP2/ERF and B3 domain-containing transcription repressor TEM1 (361 aa).

The segment at 1-73 (MEYSCVDDSS…SRKLPSSKYK (73 aa)) is disordered. The span at 9 to 27 (SSTTSESLSISTTPKPTTT) shows a compositional bias: low complexity. Positions 71 to 126 (KYKGVVPQPNGRWGAQIYEKHQRVWLGTFNEEEEAASSYDIAVRRFRGRDAVTNFK) form a DNA-binding region, AP2/ERF. A DNA-binding region (TF-B3) is located at residues 195 to 306 (FEKTVTPSDV…QLYIHWKVRS (112 aa)).

The protein belongs to the AP2/ERF transcription factor family. RAV subfamily. As to quaternary structure, interacts with FT. As to expression, expressed in leaves.

Its subcellular location is the nucleus. Transcriptional repressor of flowering time on long day plants. Acts directly on FT expression by binding 5'-CAACA-3' and 5'-CACCTG-3 sequences. Functionally redundant with TEM2. This Arabidopsis thaliana (Mouse-ear cress) protein is AP2/ERF and B3 domain-containing transcription repressor TEM1 (TEM1).